The chain runs to 163 residues: Peptidyl-prolyl cis-trans isomerase (163 aa).

Residues 5 to 162 (YFDVSSNGKP…SVLKIEDCGT (158 aa)) form the PPIase cyclophilin-type domain.

Belongs to the cyclophilin-type PPIase family. PPIase A subfamily.

The protein localises to the cytoplasm. The enzyme catalyses [protein]-peptidylproline (omega=180) = [protein]-peptidylproline (omega=0). With respect to regulation, binds cyclosporin A (CsA). CsA mediates some of its effects via an inhibitory action on PPIase. Its function is as follows. PPIases accelerate the folding of proteins. It catalyzes the cis-trans isomerization of proline imidic peptide bonds in oligopeptides. The sequence is that of Peptidyl-prolyl cis-trans isomerase (PIG28) from Uromyces fabae (Rust fungus).